The chain runs to 372 residues: Embryonic growth/differentiation factor 1 (372 aa).

Residues 1–29 (MPPPQQGPCGHHLLLLLALLLPSLPLTRA) form the signal peptide. Positions 30-253 (PVPPGPAAAL…LCHPLARPRR (224 aa)) are excised as a propeptide. Residues 67–86 (RRRDPQETRSGSRRTSPGVT) form a disordered region. Asn206 carries N-linked (GlcNAc...) asparagine glycosylation. 3 disulfides stabilise this stretch: Cys267–Cys337, Cys296–Cys369, and Cys300–Cys371.

The protein belongs to the TGF-beta family. As to quaternary structure, homodimer; disulfide-linked. In terms of tissue distribution, expressed in the brain.

The protein localises to the secreted. May mediate cell differentiation events during embryonic development. The polypeptide is Embryonic growth/differentiation factor 1 (GDF1) (Homo sapiens (Human)).